The sequence spans 348 residues: Protein RecA (348 aa).

ATP is bound at residue 64–71 (GPESSGKT). The segment covering 325-335 (YEIDGSSKEPL) has biased composition (basic and acidic residues). The disordered stretch occupies residues 325-348 (YEIDGSSKEPLDEKEETLSLLDDE).

This sequence belongs to the RecA family.

The protein resides in the cytoplasm. In terms of biological role, can catalyze the hydrolysis of ATP in the presence of single-stranded DNA, the ATP-dependent uptake of single-stranded DNA by duplex DNA, and the ATP-dependent hybridization of homologous single-stranded DNAs. It interacts with LexA causing its activation and leading to its autocatalytic cleavage. The chain is Protein RecA from Listeria monocytogenes serotype 1/2a (strain 10403S).